The following is a 249-amino-acid chain: tRNA pseudouridine synthase A (249 aa).

Asp53 acts as the Nucleophile in catalysis. Substrate is bound at residue Tyr111.

Belongs to the tRNA pseudouridine synthase TruA family. As to quaternary structure, homodimer.

The catalysed reaction is uridine(38/39/40) in tRNA = pseudouridine(38/39/40) in tRNA. Formation of pseudouridine at positions 38, 39 and 40 in the anticodon stem and loop of transfer RNAs. This Streptococcus suis (strain 98HAH33) protein is tRNA pseudouridine synthase A.